The sequence spans 607 residues: Arginine--tRNA ligase, cytoplasmic (607 aa).

An N-acetylalanine modification is found at Ala-2. Residue Ser-15 is modified to Phosphoserine. Interaction with tRNA stretches follow at residues 59–60 (EW) and 106–111 (NGPFIQ). L-arginine is bound by residues 148–153 (EFSSPN), His-162, Tyr-347, Asp-351, and Gln-375. Residues 151 to 162 (SPNIAKPFHAGH) carry the 'HIGH' region motif. An interaction with tRNA region spans residues 484–498 (DTGPYLQYAHSRLRS).

It belongs to the class-I aminoacyl-tRNA synthetase family. In terms of assembly, monomer.

It is found in the cytoplasm. The protein localises to the cytosol. The enzyme catalyses tRNA(Arg) + L-arginine + ATP = L-arginyl-tRNA(Arg) + AMP + diphosphate. In terms of biological role, forms part of a macromolecular complex that catalyzes the attachment of specific amino acids to cognate tRNAs during protein synthesis. The protein is Arginine--tRNA ligase, cytoplasmic of Saccharomyces cerevisiae (strain ATCC 204508 / S288c) (Baker's yeast).